Reading from the N-terminus, the 56-residue chain is UPF0434 protein Sden_2197 (56 aa).

Belongs to the UPF0434 family.

This is UPF0434 protein Sden_2197 from Shewanella denitrificans (strain OS217 / ATCC BAA-1090 / DSM 15013).